The following is a 137-amino-acid chain: L-ectoine synthase (137 aa).

Residues 115–137 (EVHDESGAYPADPELAREPVAAD) form a disordered region.

The protein belongs to the ectoine synthase family.

The catalysed reaction is (2S)-4-acetamido-2-aminobutanoate = L-ectoine + H2O. The protein operates within amine and polyamine biosynthesis; ectoine biosynthesis; L-ectoine from L-aspartate 4-semialdehyde: step 3/3. In terms of biological role, catalyzes the circularization of gamma-N-acetyl-alpha,gamma-diaminobutyric acid (ADABA) to ectoine (1,4,5,6-tetrahydro-2-methyl-4-pyrimidine carboxylic acid), which is an excellent osmoprotectant. This Sphingopyxis alaskensis (strain DSM 13593 / LMG 18877 / RB2256) (Sphingomonas alaskensis) protein is L-ectoine synthase.